The following is a 338-amino-acid chain: Auxin-responsive protein IAA9 (338 aa).

The disordered stretch occupies residues 1-25 (MSPEEELQSNVSVASSSPTSNCISR). Residues 9–21 (SNVSVASSSPTSN) are compositionally biased toward low complexity. The EAR-like (transcriptional repression) motif lies at 68-72 (LTLGL). The interval 150 to 186 (ATQSVTKKDVPQNIPKGQSSTTNNSSSPPAAKAQIVG) is disordered. Residues 168-180 (SSTTNNSSSPPAA) show a composition bias toward low complexity. A PB1 domain is found at 216 to 318 (ALFVKVSMDG…VCKKLKIMKG (103 aa)).

This sequence belongs to the Aux/IAA family. As to quaternary structure, homodimers and heterodimers. Interacts with TPL. Post-translationally, phosphorylated by phytochrome A in vitro. In terms of tissue distribution, highly expressed in the whole plant.

The protein resides in the nucleus. Functionally, aux/IAA proteins are short-lived transcriptional factors that function as repressors of early auxin response genes at low auxin concentrations. Repression is thought to result from the interaction with auxin response factors (ARFs), proteins that bind to the auxin-responsive promoter element (AuxRE). Formation of heterodimers with ARF proteins may alter their ability to modulate early auxin response genes expression. The sequence is that of Auxin-responsive protein IAA9 (IAA9) from Arabidopsis thaliana (Mouse-ear cress).